A 297-amino-acid polypeptide reads, in one-letter code: D-aminoacyl-tRNA deacylase (297 aa).

The protein belongs to the DtdA deacylase family. Monomer. Zn(2+) is required as a cofactor.

The enzyme catalyses a D-aminoacyl-tRNA + H2O = a tRNA + a D-alpha-amino acid + H(+). It catalyses the reaction glycyl-tRNA(Ala) + H2O = tRNA(Ala) + glycine + H(+). Functionally, D-aminoacyl-tRNA deacylase with broad substrate specificity. By recycling D-aminoacyl-tRNA to D-amino acids and free tRNA molecules, this enzyme counteracts the toxicity associated with the formation of D-aminoacyl-tRNA entities in vivo. The polypeptide is D-aminoacyl-tRNA deacylase (Methanosarcina acetivorans (strain ATCC 35395 / DSM 2834 / JCM 12185 / C2A)).